A 153-amino-acid chain; its full sequence is MTTEKKSLGIQEIMDLLPHRYPFLMVDKVENYEISDERKTLRAIKNVSFNEPIFQGHFPAKPVFPGVLILEAMAQATGILAFTMVGKPSPNELYYFASIDNARFKRPVGPGDQLVLDVEFLKERRGIAKFTGVATVNGEVVCTAELMCAKREV.

His57 is an active-site residue.

Belongs to the thioester dehydratase family. FabZ subfamily.

It localises to the cytoplasm. It catalyses the reaction a (3R)-hydroxyacyl-[ACP] = a (2E)-enoyl-[ACP] + H2O. Its function is as follows. Involved in unsaturated fatty acids biosynthesis. Catalyzes the dehydration of short chain beta-hydroxyacyl-ACPs and long chain saturated and unsaturated beta-hydroxyacyl-ACPs. This is 3-hydroxyacyl-[acyl-carrier-protein] dehydratase FabZ from Aeromonas hydrophila subsp. hydrophila (strain ATCC 7966 / DSM 30187 / BCRC 13018 / CCUG 14551 / JCM 1027 / KCTC 2358 / NCIMB 9240 / NCTC 8049).